The primary structure comprises 506 residues: BTB/POZ domain-containing protein At3g22104 (506 aa).

Residues 6–76 form the BTB domain; it reads SDLEVDINGE…CYNDGRVAVM (71 aa). Positions 187-435 constitute an NPH3 domain; that stretch reads TWWFDEVLVL…LDEQQQQQQQ (249 aa). The stretch at 421-492 forms a coiled coil; sequence QAIETLDEQQ…MEVIKKRSKS (72 aa). The segment at 485 to 506 is disordered; it reads VIKKRSKSSSKGSNRSLPKLCS.

This sequence belongs to the NPH3 family.

It functions in the pathway protein modification; protein ubiquitination. Functionally, may act as a substrate-specific adapter of an E3 ubiquitin-protein ligase complex (CUL3-RBX1-BTB) which mediates the ubiquitination and subsequent proteasomal degradation of target proteins. The sequence is that of BTB/POZ domain-containing protein At3g22104 from Arabidopsis thaliana (Mouse-ear cress).